A 180-amino-acid polypeptide reads, in one-letter code: Crossover junction endodeoxyribonuclease RuvC (180 aa).

Active-site residues include Asp-7, Glu-66, and Asp-138. Mg(2+) is bound by residues Asp-7, Glu-66, and Asp-138.

It belongs to the RuvC family. Homodimer which binds Holliday junction (HJ) DNA. The HJ becomes 2-fold symmetrical on binding to RuvC with unstacked arms; it has a different conformation from HJ DNA in complex with RuvA. In the full resolvosome a probable DNA-RuvA(4)-RuvB(12)-RuvC(2) complex forms which resolves the HJ. Mg(2+) serves as cofactor.

It localises to the cytoplasm. The enzyme catalyses Endonucleolytic cleavage at a junction such as a reciprocal single-stranded crossover between two homologous DNA duplexes (Holliday junction).. The RuvA-RuvB-RuvC complex processes Holliday junction (HJ) DNA during genetic recombination and DNA repair. Endonuclease that resolves HJ intermediates. Cleaves cruciform DNA by making single-stranded nicks across the HJ at symmetrical positions within the homologous arms, yielding a 5'-phosphate and a 3'-hydroxyl group; requires a central core of homology in the junction. The consensus cleavage sequence is 5'-(A/T)TT(C/G)-3'. Cleavage occurs on the 3'-side of the TT dinucleotide at the point of strand exchange. HJ branch migration catalyzed by RuvA-RuvB allows RuvC to scan DNA until it finds its consensus sequence, where it cleaves and resolves the cruciform DNA. The chain is Crossover junction endodeoxyribonuclease RuvC from Burkholderia vietnamiensis (strain G4 / LMG 22486) (Burkholderia cepacia (strain R1808)).